The chain runs to 337 residues: Retrovirus-related Pol polyprotein from type-1 retrotransposable element R1 (337 aa).

In terms of domain architecture, Reverse transcriptase spans 1–118 (GCPQGSISGP…KSARYLGVCM (118 aa)). The interval 253–337 (KRARSCKLMK…ACPCGAPRED (85 aa)) is nucleic acid-binding endonuclease.

The enzyme catalyses DNA(n) + a 2'-deoxyribonucleoside 5'-triphosphate = DNA(n+1) + diphosphate. This is Retrovirus-related Pol polyprotein from type-1 retrotransposable element R1 from Nasonia vitripennis (Parasitic wasp).